The sequence spans 148 residues: MKVILKADVKALGKKGQVYEVSDGYARNFLFPKGLAVEATSGNLNDLASKKANEEKKKEQEKQEAQTLAAKLSSLSIEIHTKSGEGGRLFGSVTNKEIAEALKASHGINLDRRKLELKEPIKALGTFNVQAKLHPEVTAQFQVHVKAS.

It belongs to the bacterial ribosomal protein bL9 family.

Its function is as follows. Binds to the 23S rRNA. This chain is Large ribosomal subunit protein bL9, found in Desulfitobacterium hafniense (strain DSM 10664 / DCB-2).